Consider the following 891-residue polypeptide: von Willebrand factor A domain-containing protein 7 (891 aa).

The first 28 residues, 1–28 (MLPVEVPLSHLGPPILLLLQLLLPPTSA), serve as a signal peptide directing secretion. N55 is a glycosylation site (N-linked (GlcNAc...) asparagine). The tract at residues 238-273 (PKPPGKCSHGGHFDQSSSQPPRGGINKDSTSPSFSP) is disordered. In terms of domain architecture, VWFA spans 314–499 (ASSLSFVLDT…DVAAIVGESM (186 aa)).

Expressed at low level in many tissues.

Its subcellular location is the secreted. The polypeptide is von Willebrand factor A domain-containing protein 7 (Vwa7) (Mus musculus (Mouse)).